A 662-amino-acid polypeptide reads, in one-letter code: MSENKFLPICKDDMIERGWEQCDFVLVTADAYIDHHSFGTAIISRVLENAGYKVGIIAQPDWKSVDDFKKLGRPRLGFLVNGGNMDPMVNHYTVSKKLRKKDLYTPKGEMGKRPDRATIVYCNKIREAYKDVNIVIGGIEASLRRFAHYDYWDNKVRKSILVDSGADLLVYGMSEKQIVEVADFLNQGFDGKYIRHIPGTCYIADSLDEIYEEHIVLPSFKDVSSDKRTYAECFKIQYDEQDPVRGRTLVQEHNGKYVVINKPEMPLSREELDRVYALPYQKTYHPIYEKDGGIAAIEEVKFSLVSSRGCSGNCSFCAITFHQGRIVTSRSEDSIVEEAEEITKYDDFKGYIHDIGGPTANFRKPACKKQLTLGACKHKRCMSPGICKNMEVDHREYLHLLRRVRKLPGIKKVFIRSGLRYDYIMADKDDTFFKELVEHHVSGQLKVAPEHVSPNVLKYMGKPAGKTYDEFRRKFFKITERLGKKQFIIPYLMSSHPGCKLEDAIMLAEYLRDINYQPEQVQDFYPTPGTLSTTMFYTELDPLTMEEVYIPRSKEEKAMQRALLQFKNPKNYNIVYDALVKAGREDLIGNGPKCLIRDKNSFGKGNNHSNHKSGGRKSRNENSGRRESEDKKRSSHSKKQRGNKSRGFDQKSQRVSKGKKRR.

Positions 296-567 constitute a Radical SAM core domain; the sequence is AIEEVKFSLV…AMQRALLQFK (272 aa). Positions 310, 314, and 317 each coordinate [4Fe-4S] cluster. The disordered stretch occupies residues 597–662; that stretch reads RDKNSFGKGN…QRVSKGKKRR (66 aa). Residues 618–632 show a composition bias toward basic and acidic residues; sequence SRNENSGRRESEDKK. Positions 633 to 644 are enriched in basic residues; sequence RSSHSKKQRGNK.

This sequence belongs to the UPF0313 family. Requires [4Fe-4S] cluster as cofactor.

The protein is UPF0313 protein CPR_1216 of Clostridium perfringens (strain SM101 / Type A).